The sequence spans 413 residues: O-methyltransferase kntB (413 aa).

Residues 255–256 (GG), aspartate 280, 302–303 (NF), and arginine 319 contribute to the S-adenosyl-L-methionine site. The Proton acceptor role is filled by histidine 322.

Belongs to the class I-like SAM-binding methyltransferase superfamily. Cation-independent O-methyltransferase family. S-adenosyl-L-methionine is required as a cofactor.

It participates in secondary metabolite biosynthesis. Functionally, non-reducing polyketide synthase; part of the gene cluster that mediates the biosynthesis of the bicoumarin kotanin. The non-reducing polyketide synthase ktnS first catalyzes the formation of the pentaketidic 4,7-dihydroxy-5-methylcoumarin from acetyl coenzyme A and 4 malonyl coenzyme A molecules. Further O-methylation by ktnB leads to the formation of 7-demethylsiderin. Then, an oxidative phenol coupling catalyzed by the cytochrome P450 monooxygenase ktnC forms the 8,8'-dimer P-orlandin via dimerization the monomeric precursor, 7-demethylsiderin. P-orlandin is subsequently O-methylated in a stepwise fashion to demethylkotanin and kotanin. The chain is O-methyltransferase kntB from Aspergillus niger (strain ATCC MYA-4892 / CBS 513.88 / FGSC A1513).